The chain runs to 1488 residues: Phenolphthiocerol/phthiocerol polyketide synthase subunit E (1488 aa).

The region spanning 5–438 (ENAIAVVGMA…GTNAHVVLEE (434 aa)) is the Ketosynthase family 3 (KS3) domain. Residues cysteine 184, histidine 320, and histidine 361 each act as for beta-ketoacyl synthase activity in the active site. The acyltransferase stretch occupies residues 551 to 868 (VFLFPGQGAQ…GELWSAGVEV (318 aa)). Serine 641 acts as the For malonyltransferase activity in catalysis. The region spanning 930–1004 (NGESQTEVTL…SLTAAVDASF (75 aa)) is the Carrier domain. An O-(pantetheine 4'-phosphoryl)serine modification is found at serine 965. An NADP(+)-binding site is contributed by 1286–1331 (EGVVAVELEGEGRSVLRPDVDLRRTVGWFTTYYPVPLACATGLGAL).

NADP(+) serves as cofactor. It depends on pantetheine 4'-phosphate as a cofactor.

It catalyses the reaction icosanoyl-[(phenol)carboxyphthiodiolenone synthase] + 2 (S)-methylmalonyl-CoA + 3 malonyl-CoA + 5 NADPH + 10 H(+) = C32-carboxyphthiodiolenone-[(phenol)carboxyphthiodiolenone synthase] + 5 CO2 + 5 NADP(+) + 5 CoA + 2 H2O. The enzyme catalyses docosanoyl-[(phenol)carboxyphthiodiolenone synthase] + 2 (S)-methylmalonyl-CoA + 3 malonyl-CoA + 5 NADPH + 10 H(+) = C34-carboxyphthiodiolenone-[(phenol)carboxyphthiodiolenone synthase] + 5 CO2 + 5 NADP(+) + 5 CoA + 2 H2O. The catalysed reaction is 17-(4-hydroxyphenyl)heptadecanoyl-[(phenol)carboxyphthiodiolenone synthase] + 2 (S)-methylmalonyl-CoA + 3 malonyl-CoA + 5 NADPH + 10 H(+) = C35-(phenol)carboxyphthiodiolenone-[(phenol)carboxyphthiodiolenone synthase] + 5 CO2 + 5 NADP(+) + 5 CoA + 2 H2O. It carries out the reaction 19-(4-hydroxyphenyl)nonadecanoyl-[(phenol)carboxyphthiodiolenone synthase] + 2 (S)-methylmalonyl-CoA + 3 malonyl-CoA + 5 NADPH + 10 H(+) = C37-(phenol)carboxyphthiodiolenone-[(phenol)carboxyphthiodiolenone synthase] + 5 CO2 + 5 NADP(+) + 5 CoA + 2 H2O. It functions in the pathway lipid metabolism; fatty acid biosynthesis. Its function is as follows. Part of the PpsABCDE complex involved in the biosynthesis of the lipid core common to phthiocerols and phenolphthiocerols by successive additions of malonyl-CoA or methylmalonyl-CoA extender units. PpsA can accept as substrate the activated forms of either icosanoyl (C20), docosanoyl (C22) or lignoceroyl (C24) groups from FadD26, or a (4-hydroxyphenyl)-C17 or (4-hydroxyphenyl)-C19 fatty acyl from FadD29. PpsA initiates the biosynthesis and extends its substrate using a malonyl-CoA extender unit. The PpsB and PpsC proteins add the second and third malonyl-CoA extender units. PpsD adds an (R)-methylmalonyl unit and PpsE adds a second (R)-methylmalonyl unit. The incorporation of the methylmalonyl units results in formation of two branched methyl groups in the elongated product. The sequence is that of Phenolphthiocerol/phthiocerol polyketide synthase subunit E (ppsE) from Mycobacterium tuberculosis (strain CDC 1551 / Oshkosh).